We begin with the raw amino-acid sequence, 580 residues long: Laccase-20 (580 aa).

A signal peptide spans 1 to 23 (MVASLLCTVAVAVLAVAAVGGEA). Plastocyanin-like domains are found at residues 31–147 (VVHE…PRDG) and 156–310 (KDVP…YTSA). N36 and N42 each carry an N-linked (GlcNAc...) asparagine glycan. Residues H81 and H83 each contribute to the Cu cation site. The N-linked (GlcNAc...) asparagine glycan is linked to N115. Cu cation-binding residues include H126 and H128. Residues N200, N339, N392, N429, and N460 are each glycosylated (N-linked (GlcNAc...) asparagine). A Plastocyanin-like 3 domain is found at 419–561 (DFPVRPPRPY…ATAFIVEDGP (143 aa)). Cu cation-binding residues include N478, H481, H483, H540, C541, H542, H546, and M551. The disordered stretch occupies residues 560–580 (GPTPETSLPPPPPEFKRCDAS).

The protein belongs to the multicopper oxidase family. Cu cation is required as a cofactor.

The protein localises to the secreted. The protein resides in the extracellular space. It localises to the apoplast. It catalyses the reaction 4 hydroquinone + O2 = 4 benzosemiquinone + 2 H2O. Lignin degradation and detoxification of lignin-derived products. In Oryza sativa subsp. indica (Rice), this protein is Laccase-20 (LAC20).